We begin with the raw amino-acid sequence, 122 residues long: Large ribosomal subunit protein uL14 (122 aa).

The protein belongs to the universal ribosomal protein uL14 family. Part of the 50S ribosomal subunit. Forms a cluster with proteins L3 and L19. In the 70S ribosome, L14 and L19 interact and together make contacts with the 16S rRNA in bridges B5 and B8.

Its function is as follows. Binds to 23S rRNA. Forms part of two intersubunit bridges in the 70S ribosome. The chain is Large ribosomal subunit protein uL14 from Fervidobacterium nodosum (strain ATCC 35602 / DSM 5306 / Rt17-B1).